Consider the following 164-residue polypeptide: UPF0178 protein RPD_2254 (164 aa).

This sequence belongs to the UPF0178 family.

This chain is UPF0178 protein RPD_2254, found in Rhodopseudomonas palustris (strain BisB5).